Reading from the N-terminus, the 118-residue chain is MAWALLLLTLLTQGTGSWAQSALTQPPSASGSPGQSVTISCTGTSSDVGGYNYVSWYQQHPGKAPKLMIYEVSKRPSGVPDRFSGSKSGNTASLTVSGLQAEDEADYYCSSYAGSNNF.

The first 19 residues, 1-19 (MAWALLLLTLLTQGTGSWA), serve as a signal peptide directing secretion. Glutamine 20 bears the Pyrrolidone carboxylic acid mark. Positions 20–44 (QSALTQPPSASGSPGQSVTISCTGT) are framework-1. In terms of domain architecture, Ig-like spans 20-118 (QSALTQPPSA…CSSYAGSNNF (99 aa)). The cysteines at positions 41 and 109 are disulfide-linked. A complementarity-determining-1 region spans residues 45–53 (SSDVGGYNY). Residues 54 to 70 (VSWYQQHPGKAPKLMIY) are framework-2. Residues 71 to 73 (EVS) are complementarity-determining-2. The interval 74 to 109 (KRPSGVPDRFSGSKSGNTASLTVSGLQAEDEADYYC) is framework-3. The disordered stretch occupies residues 76-97 (PSGVPDRFSGSKSGNTASLTVS). Residues 85 to 97 (GSKSGNTASLTVS) show a composition bias toward polar residues. Residues 110–118 (SSYAGSNNF) are complementarity-determining-3.

In terms of assembly, immunoglobulins are composed of two identical heavy chains and two identical light chains; disulfide-linked.

It is found in the secreted. It localises to the cell membrane. In terms of biological role, v region of the variable domain of immunoglobulin light chains that participates in the antigen recognition. Immunoglobulins, also known as antibodies, are membrane-bound or secreted glycoproteins produced by B lymphocytes. In the recognition phase of humoral immunity, the membrane-bound immunoglobulins serve as receptors which, upon binding of a specific antigen, trigger the clonal expansion and differentiation of B lymphocytes into immunoglobulins-secreting plasma cells. Secreted immunoglobulins mediate the effector phase of humoral immunity, which results in the elimination of bound antigens. The antigen binding site is formed by the variable domain of one heavy chain, together with that of its associated light chain. Thus, each immunoglobulin has two antigen binding sites with remarkable affinity for a particular antigen. The variable domains are assembled by a process called V-(D)-J rearrangement and can then be subjected to somatic hypermutations which, after exposure to antigen and selection, allow affinity maturation for a particular antigen. This is Immunoglobulin lambda variable 2-8 from Homo sapiens (Human).